The chain runs to 66 residues: Alpha-actitoxin-Ms11a-1 (66 aa).

A signal peptide spans 1-24 (MASKIFFVLAVFLVMSAVLPESFA). 3 disulfides stabilise this stretch: Cys-26–Cys-41, Cys-33–Cys-46, and Cys-40–Cys-61.

It is found in the secreted. It localises to the nematocyst. Alpha-toxins act on postsynaptic membranes, they bind to the nicotinic acetylcholine receptors (nAChR) and thus inhibit them. This toxin competes with alpha-bungarotoxin for binding to orthosteric sites on muscle-type T.carlifornicus (IC(50)=408 nM) and human alpha-7/CHRNA7 nAChRs (IC(50)=14.16 uM). This chain is Alpha-actitoxin-Ms11a-1, found in Metridium senile (Brown sea anemone).